A 542-amino-acid chain; its full sequence is Keratin, type II cytoskeletal 75 (542 aa).

The span at 1–26 shows a compositional bias: polar residues; sequence MSRQSTVTFHSGSRRGFSTASATTPT. Residues 1–44 are disordered; the sequence is MSRQSTVTFHSGSRRGFSTASATTPTAGRSRFSSVSVARSSGNS. Residues 1–139 are head; it reads MSRQSTVTFH…DPTIQRVRKE (139 aa). Residues 27–42 show a composition bias toward low complexity; sequence AGRSRFSSVSVARSSG. The coil 1A stretch occupies residues 140–175; sequence EREQIKTLNNKFASFIDKVRFLEQQNKVLETKWNLL. An IF rod domain is found at 140 to 453; the sequence is EREQIKTLNN…KLLEGEECRL (314 aa). The segment at 176–194 is linker 1; sequence QEQGSRTVRQNLEPFFDAY. Positions 195 to 287 are coil 1B; the sequence is VNDLRRQLDS…VYEAELSQMQ (93 aa). The linker 12 stretch occupies residues 288 to 310; sequence NQVSDTSVVLSMDNNRSLDLDSI. The tract at residues 311–449 is coil 2; the sequence is IAEVKAQYED…ATYRKLLEGE (139 aa). The interval 450 to 542 is tail; sequence ECRLSGEGVS…TSSSRKSYKH (93 aa). The interval 514-542 is disordered; the sequence is TSSSRGPVGSGSSIKFVSSTSSSRKSYKH.

This sequence belongs to the intermediate filament family. Heterodimer of a type I and a type II keratin. May associate with KRT17.

Functionally, plays a central role in hair and nail formation. Essential component of keratin intermediate filaments in the companion layer of the hair follicle. This chain is Keratin, type II cytoskeletal 75 (Krt75), found in Rattus norvegicus (Rat).